The following is a 393-amino-acid chain: Heparan sulfate glucosamine 3-O-sulfotransferase 3A1 (393 aa).

The Cytoplasmic segment spans residues 1 to 24 (MAPSGPTGAQPSPAEPLSRSIFRK). Residues 25-43 (FLLMLCSLLTSLYVFYCLA) form a helical; Signal-anchor for type II membrane protein membrane-spanning segment. The Lumenal segment spans residues 44 to 393 (ERCPPGSGPV…MTGRDFGWDG (350 aa)). Positions 85–121 (QRRRRGRSGPGDSSDQEEQSPGLAAAPGGSGAGSSVA) are disordered. Position 149–153 (149–153 (KGGTR)) interacts with 3'-phosphoadenylyl sulfate. Substrate contacts are provided by residues 171–177 (EPHFFDR) and 202–205 (KTPS). Positions 230 and 238 each coordinate 3'-phosphoadenylyl sulfate. Asparagine 260 is a glycosylation site (N-linked (GlcNAc...) asparagine). 270 to 271 (WS) lines the substrate pocket. Asparagine 331 carries an N-linked (GlcNAc...) asparagine glycan. Cysteine 338 and cysteine 350 form a disulfide bridge. 355-359 (KGRAH) serves as a coordination point for 3'-phosphoadenylyl sulfate.

The protein belongs to the sulfotransferase 1 family.

It localises to the golgi apparatus membrane. The catalysed reaction is alpha-D-glucosaminyl-[heparan sulfate](n) + 3'-phosphoadenylyl sulfate = 3-sulfo-alpha-D-glucosaminyl-[heparan sulfate](n) + adenosine 3',5'-bisphosphate + H(+). In terms of biological role, sulfotransferase that utilizes 3'-phospho-5'-adenylyl sulfate (PAPS) to catalyze the transfer of a sulfo group to an N-unsubstituted glucosamine linked to a 2-O-sulfo iduronic acid unit on heparan sulfate. Catalyzes the O-sulfation of glucosamine in IdoUA2S-GlcNS and also in IdoUA2S-GlcNH2. Unlike HS3ST1/3-OST-1, does not convert non-anticoagulant heparan sulfate to anticoagulant heparan sulfate. The sequence is that of Heparan sulfate glucosamine 3-O-sulfotransferase 3A1 (Hs3st3a1) from Mus musculus (Mouse).